Reading from the N-terminus, the 686-residue chain is Mannan-binding lectin serine protease 2 (686 aa).

The N-terminal stretch at 1–15 (MRLLTLLGLLCGSVA) is a signal peptide. The 122-residue stretch at 16–137 (TPLGPKWPEP…TGFEAFYAAE (122 aa)) folds into the CUB 1 domain. Ca(2+) is bound by residues Glu67, Asp75, Asp120, Ser122, Asn123, Asp138, Ile139, and Glu141. A disulfide bond links Cys72 and Cys90. Positions 138 to 181 (DIDECQVAPGEAPTCDHHCHNHLGGFYCSCRAGYVLHRNKRTCS) constitute an EGF-like; calcium-binding domain. 12 cysteine pairs are disulfide-bonded: Cys142–Cys156, Cys152–Cys165, Cys167–Cys180, Cys184–Cys211, Cys241–Cys259, Cys300–Cys348, Cys328–Cys361, Cys366–Cys412, Cys396–Cys430, Cys434–Cys552, Cys598–Cys618, and Cys629–Cys660. Asn158, His159, and Gly162 together coordinate Ca(2+). The residue at position 158 (Asn158) is a (3R)-3-hydroxyasparagine. A CUB 2 domain is found at 184-296 (CSGQVFTQRS…TGWKIHYTST (113 aa)). 2 consecutive Sushi domains span residues 298-363 (QPCP…ACSI) and 364-432 (VDCG…VCEP). Positions 445–684 (IYGGQKAKPG…YIPWIENIIS (240 aa)) constitute a Peptidase S1 domain. Catalysis depends on charge relay system residues His483 and Asp532. The active-site Charge relay system is the Ser633.

The protein belongs to the peptidase S1 family. In terms of assembly, homodimer; disulfide-linked. Binds MBL2. Isoform 2 binds to MASP1. Binds SERPING1. Dimerization and MBL2 binding requires calcium ions. Post-translationally, the iron and 2-oxoglutarate dependent 3-hydroxylation of aspartate and asparagine is (R) stereospecific within EGF domains. In terms of processing, activated by cleavage after Arg-444. The uncleaved zymogen is inactive towards synthetic substrates, but has sufficient activity to effect autocatalytic cleavage. In terms of tissue distribution, plasma.

Its subcellular location is the secreted. It carries out the reaction Selective cleavage after Arg-223 in complement component C2 (-Ser-Leu-Gly-Arg-|-Lys-Ile-Gln-Ile) and after Arg-76 in complement component C4 (-Gly-Leu-Gln-Arg-|-Ala-Leu-Glu-Ile).. In terms of biological role, serum protease that plays an important role in the activation of the complement system via mannose-binding lectin. After activation by auto-catalytic cleavage it cleaves C2 and C4, leading to their activation and to the formation of C3 convertase. The chain is Mannan-binding lectin serine protease 2 (MASP2) from Homo sapiens (Human).